Consider the following 329-residue polypeptide: Mitochondrial substrate carrier family protein W (329 aa).

Residues 1–39 (MTTNNSNDNNKRYGIIKQQLQQQQQQHHQQHEQHSRLVE) are Mitochondrial intermembrane-facing. 3 Solcar repeats span residues 34–119 (HSRL…CKEL), 133–221 (ESPL…FKSI), and 231–321 (LGIV…IKKF). A helical transmembrane segment spans residues 40-60 (MTAGCGAGFMASLFTTPLDVI). Topologically, residues 61–90 (KTTLQVDNSSNKTIMSTVKSILDRKGGVKN) are mitochondrial matrix. Residues 91–111 (LYLGLKPTLVGQIPSWAVYFS) traverse the membrane as a helical segment. The Mitochondrial intermembrane segment spans residues 112–135 (TYTFCKELFTKENDKHSLLEKESP). A helical transmembrane segment spans residues 136–156 (LIFMTSAIIAGAATSICTSPI). Residues 157–193 (WLIKTRFITQEMVGRQKKYRGIVHSMVSIYHEEGFRG) lie on the Mitochondrial matrix side of the membrane. Residues 194-214 (LYKGLGPSLLGVLHVGVQFPL) traverse the membrane as a helical segment. Residues 215 to 230 (YEKFKSILKEKNKNKE) lie on the Mitochondrial intermembrane side of the membrane. A helical membrane pass occupies residues 231–251 (LGIVEIMIASSVSKIIASVVA). At 252–296 (YPHEVLRARSQDSSPDSPNRTYRGNIIQMFKQIVREEGWRGLYRG) the chain is on the mitochondrial matrix side. The helical transmembrane segment at 297-315 (MGVNLLRVTPSCVITFTSY) threads the bilayer. Over 316 to 329 (EYIKKFLSQNQNHF) the chain is Mitochondrial intermembrane.

This sequence belongs to the mitochondrial carrier (TC 2.A.29) family.

It is found in the mitochondrion inner membrane. In terms of biological role, mitochondrial solute carriers shuttle metabolites, nucleotides, and cofactors through the mitochondrial inner membrane. This chain is Mitochondrial substrate carrier family protein W (mcfW), found in Dictyostelium discoideum (Social amoeba).